A 740-amino-acid chain; its full sequence is NAD(P)H-quinone oxidoreductase subunit 5, chloroplastic (740 aa).

Transmembrane regions (helical) follow at residues 9 to 29 (WIIPFIPLPVPMLIGAGLILF), 40 to 60 (WAFQSVLLLSIVMIFSIYLSI), 89 to 109 (IDPLTSIMSILITTVGIMVLI), 125 to 145 (FAYMSFFSTSMLGLVTSSNLI), 147 to 167 (IYIFWELVGLCSYLLIGFWFT), 185 to 205 (GDFGLLLGILGFYWITGSFEF), 219 to 239 (NEVNFLFVTLCAVLLFAGAVA), 258 to 278 (TPISALIHAATMVAAGIFLVA), 286 to 306 (VIPYIMYLISVIGIITVLLGA), 327 to 347 (LGYMMLALGMGSYRSALFHLI), 354 to 374 (ALLFLGSGSIIHSMETIVGYS), 396 to 416 (ITFLLGTLSLCGIPPLACFWS), 425 to 445 (WLYSPIFAIIAWATAGLTAFY), 543 to 563 (LFPIFVLGLFTLFVGSIGIPF), 602 to 622 (VLSVSIAYFGIFLASFLYKPI), and 718 to 738 (YLFLYLAYVSVFLLVYYLFFL).

It belongs to the complex I subunit 5 family. In terms of assembly, NDH is composed of at least 16 different subunits, 5 of which are encoded in the nucleus.

The protein resides in the plastid. It localises to the chloroplast thylakoid membrane. It carries out the reaction a plastoquinone + NADH + (n+1) H(+)(in) = a plastoquinol + NAD(+) + n H(+)(out). The enzyme catalyses a plastoquinone + NADPH + (n+1) H(+)(in) = a plastoquinol + NADP(+) + n H(+)(out). Functionally, NDH shuttles electrons from NAD(P)H:plastoquinone, via FMN and iron-sulfur (Fe-S) centers, to quinones in the photosynthetic chain and possibly in a chloroplast respiratory chain. The immediate electron acceptor for the enzyme in this species is believed to be plastoquinone. Couples the redox reaction to proton translocation, and thus conserves the redox energy in a proton gradient. The chain is NAD(P)H-quinone oxidoreductase subunit 5, chloroplastic (ndhF) from Atropa belladonna (Belladonna).